The primary structure comprises 434 residues: UDP-N-acetylglucosamine 1-carboxyvinyltransferase 1 (434 aa).

Phosphoenolpyruvate is bound at residue 22 to 23 (KN). A UDP-N-acetyl-alpha-D-glucosamine-binding site is contributed by R93. The active-site Proton donor is C117. C117 is subject to 2-(S-cysteinyl)pyruvic acid O-phosphothioketal. UDP-N-acetyl-alpha-D-glucosamine is bound by residues 122–126 (RPIDQ), D306, and V328.

The protein belongs to the EPSP synthase family. MurA subfamily.

The protein resides in the cytoplasm. The catalysed reaction is phosphoenolpyruvate + UDP-N-acetyl-alpha-D-glucosamine = UDP-N-acetyl-3-O-(1-carboxyvinyl)-alpha-D-glucosamine + phosphate. It participates in cell wall biogenesis; peptidoglycan biosynthesis. Its function is as follows. Cell wall formation. Adds enolpyruvyl to UDP-N-acetylglucosamine. The polypeptide is UDP-N-acetylglucosamine 1-carboxyvinyltransferase 1 (Bacillus cereus (strain ATCC 14579 / DSM 31 / CCUG 7414 / JCM 2152 / NBRC 15305 / NCIMB 9373 / NCTC 2599 / NRRL B-3711)).